Here is a 146-residue protein sequence, read N- to C-terminus: Hemoglobin subunit beta (146 aa).

At V1 the chain carries N-acetylvaline. One can recognise a Globin domain in the interval 2–146; sequence HLTADEKAAV…VATALAHKYH (145 aa). T12 bears the Phosphothreonine mark. S44 carries the post-translational modification Phosphoserine. At K59 the chain carries N6-acetyllysine. H63 is a binding site for heme b. The residue at position 82 (K82) is an N6-acetyllysine. H92 contacts heme b. S-nitrosocysteine is present on C93. N6-acetyllysine is present on K144.

The protein belongs to the globin family. Heterotetramer of two alpha chains and two beta chains. As to expression, red blood cells.

Functionally, involved in oxygen transport from the lung to the various peripheral tissues. The polypeptide is Hemoglobin subunit beta (HBB) (Taphozous georgianus (Sharp-nosed tomb bat)).